Reading from the N-terminus, the 351-residue chain is UDP-3-O-acylglucosamine N-acyltransferase (351 aa).

The active-site Proton acceptor is the H240.

The protein belongs to the transferase hexapeptide repeat family. LpxD subfamily. In terms of assembly, homotrimer.

It catalyses the reaction a UDP-3-O-[(3R)-3-hydroxyacyl]-alpha-D-glucosamine + a (3R)-hydroxyacyl-[ACP] = a UDP-2-N,3-O-bis[(3R)-3-hydroxyacyl]-alpha-D-glucosamine + holo-[ACP] + H(+). It functions in the pathway bacterial outer membrane biogenesis; LPS lipid A biosynthesis. In terms of biological role, catalyzes the N-acylation of UDP-3-O-acylglucosamine using 3-hydroxyacyl-ACP as the acyl donor. Is involved in the biosynthesis of lipid A, a phosphorylated glycolipid that anchors the lipopolysaccharide to the outer membrane of the cell. This chain is UDP-3-O-acylglucosamine N-acyltransferase, found in Pseudomonas fluorescens (strain SBW25).